A 756-amino-acid polypeptide reads, in one-letter code: Protein SDA1 homolog (756 aa).

A coiled-coil region spans residues 227–282 (EEEEDEAVKEKRAKDNFRKKSLAHRVGKKTKGRITRLAKSKVDLKKAKQEEDNKLQ). Composition is skewed to acidic residues over residues 494–514 (AGEEFESDDDSDSDSDDEGWE) and 521–596 (ADDD…EEEE). Disordered stretches follow at residues 494-615 (AGEE…VLRT) and 638-756 (AREN…RGRH). A compositionally biased stretch (basic and acidic residues) spans 605–615 (QQKEKVEVLRT). Residues 647 to 656 (DMDQDDDENG) are compositionally biased toward acidic residues. The segment covering 677–691 (EEKLERIARAKEGRD) has biased composition (basic and acidic residues). A compositionally biased stretch (basic residues) spans 725 to 735 (KTKKVRGKSLK). Residues 736–749 (SFRDKQIGQREHSA) are compositionally biased toward basic and acidic residues.

Belongs to the SDA1 family.

The protein localises to the nucleus. It localises to the nucleolus. In terms of biological role, required for 60S pre-ribosomal subunits export to the cytoplasm. This Dictyostelium discoideum (Social amoeba) protein is Protein SDA1 homolog (sdad1).